A 294-amino-acid chain; its full sequence is Survival motor neuron protein (294 aa).

The span at 1 to 12 (MAMSSGGSGGGV) shows a compositional bias: gly residues. Positions 1 to 32 (MAMSSGGSGGGVPEQEDSVLFRRGTGQSDDSD) are disordered. N-acetylalanine is present on Ala-2. Phosphoserine; by PKA is present on residues Ser-4, Ser-5, and Ser-8. Residue Thr-25 is modified to Phosphothreonine. An interacts with GEMIN2 region spans residues 26–51 (GQSDDSDIWDDTALIKAYDKAVASFK). A phosphoserine mark is found at Ser-28 and Ser-31. Residue Lys-51 forms a Glycyl lysine isopeptide (Lys-Gly) (interchain with G-Cter in SUMO2) linkage. The interval 59-88 (ICETSGKPKTTPKRKPAKKNKSQKKNTAAS) is disordered. The span at 68 to 82 (TTPKRKPAKKNKSQK) shows a compositional bias: basic residues. Thr-69 is subject to Phosphothreonine. Residue Thr-85 is modified to Phosphothreonine; by PKA. A Tudor domain is found at 91–151 (QWKVGDKCSA…LSPICEVANN (61 aa)). The segment at 97–209 (KCSAIWSEDG…MPGPRLGPGK (113 aa)) is required for interaction with RPP20/POP7. Positions 156-166 (AQENENESQVS) are enriched in low complexity. Residues 156-222 (AQENENESQV…KFNGPPPPPP (67 aa)) are disordered. Ser-187 carries the post-translational modification Phosphoserine; by PKA. A compositionally biased stretch (pro residues) spans 194–204 (LPPPPPMPGPR). Residues 206–215 (GPGKPGLKFN) are compositionally biased toward low complexity. Lys-209 participates in a covalent cross-link: Glycyl lysine isopeptide (Lys-Gly) (interchain with G-Cter in SUMO2). The P2 (binding site for SNRPB) stretch occupies residues 240–267 (PPIIPPPPPICPDSLDDADALGSMLISW). The tract at residues 252 to 280 (DSLDDADALGSMLISWYMSGYHTGYYMGF) is involved in homooligomerization. Positions 279–294 (GFRQNQKEGRCSHSLN) are required for interaction with SYNCRIP.

The protein belongs to the SMN family. Homooligomer; may form higher order homooligomers in the dimer to octamer range. Part of the core SMN complex that contains SMN1, GEMIN2/SIP1, DDX20/GEMIN3, GEMIN4, GEMIN5, GEMIN6, GEMIN7, GEMIN8 and STRAP/UNRIP. Part of the SMN-Sm complex that contains SMN1, GEMIN2/SIP1, DDX20/GEMIN3, GEMIN4, GEMIN5, GEMIN6, GEMIN7, GEMIN8, STRAP/UNRIP and the Sm proteins SNRPB, SNRPD1, SNRPD2, SNRPD3, SNRPE, SNRPF and SNRPG. Component of an import snRNP complex composed of KPNB1, RNUT1, SMN1 and ZNF259. Interacts with DDX20, FBL, NOLA1, RNUT1, SYNCRIP and with several spliceosomal snRNP core Sm proteins, including SNRPB, SNRPD1, SNRPD2, SNRPD3, SNRPE and ILF3. Interacts with GEMIN2; the interaction is direct. Interacts with GEMIN3; the interaction is direct. Interacts with GEMIN8; the interaction is direct. Interacts with SNRPB; the interaction is direct. Interacts (via Tudor domain) with SNRPD1 (via C-terminus); the interaction is direct. Interacts with SNRPD2; the interaction is direct. Interacts (via Tudor domain) with SNRPD3 (via C-terminus); the interaction is direct. Interacts with SNRPE; the interaction is direct. Interacts with OSTF1, LSM10, LSM11 and RPP20/POP7. Interacts (via C-terminal region) with ZPR1 (via C-terminal region). Interacts (via Tudor domain) with COIL. Interacts with SETX; recruits SETX to POLR2A. Interacts with POLR2A (via the C-terminal domain (CTD)). Interacts with PRMT5. Interacts with XRN2. Interacts (via C-terminus) with FMR1 (via C-terminus); the interaction is direct and occurs in a RNA-independent manner. Interacts (via Tudor domain) with SF3B2 ('Arg-508'-methylated form). Interacts with WRAP53/TCAB1. Interacts (via Tudor domain) with ELAVL4 in an RNA-independent manner; the interaction is required for localization of ELAVL4 to RNA granules. Interacts with FRG1. In terms of assembly, does not homooligomerize. Does not interact with SNRPB. In terms of tissue distribution, expressed in a wide variety of tissues. Expressed at high levels in brain, kidney and liver, moderate levels in skeletal and cardiac muscle, and low levels in fibroblasts and lymphocytes. Also seen at high levels in spinal cord. Present in osteoclasts and mononuclear cells (at protein level).

Its subcellular location is the nucleus. The protein localises to the gem. The protein resides in the cajal body. It is found in the cytoplasm. It localises to the cytoplasmic granule. Its subcellular location is the perikaryon. The protein localises to the cell projection. The protein resides in the neuron projection. It is found in the axon. It localises to the myofibril. Its subcellular location is the sarcomere. The protein localises to the z line. The SMN complex catalyzes the assembly of small nuclear ribonucleoproteins (snRNPs), the building blocks of the spliceosome, and thereby plays an important role in the splicing of cellular pre-mRNAs. Most spliceosomal snRNPs contain a common set of Sm proteins SNRPB, SNRPD1, SNRPD2, SNRPD3, SNRPE, SNRPF and SNRPG that assemble in a heptameric protein ring on the Sm site of the small nuclear RNA to form the core snRNP (Sm core). In the cytosol, the Sm proteins SNRPD1, SNRPD2, SNRPE, SNRPF and SNRPG are trapped in an inactive 6S pICln-Sm complex by the chaperone CLNS1A that controls the assembly of the core snRNP. To assemble core snRNPs, the SMN complex accepts the trapped 5Sm proteins from CLNS1A forming an intermediate. Within the SMN complex, SMN1 acts as a structural backbone and together with GEMIN2 it gathers the Sm complex subunits. Binding of snRNA inside 5Sm ultimately triggers eviction of the SMN complex, thereby allowing binding of SNRPD3 and SNRPB to complete assembly of the core snRNP. Ensures the correct splicing of U12 intron-containing genes that may be important for normal motor and proprioceptive neurons development. Also required for resolving RNA-DNA hybrids created by RNA polymerase II, that form R-loop in transcription terminal regions, an important step in proper transcription termination. May also play a role in the metabolism of small nucleolar ribonucleoprotein (snoRNPs). The protein is Survival motor neuron protein (SMN1) of Homo sapiens (Human).